We begin with the raw amino-acid sequence, 465 residues long: Methylenetetrahydrofolate--tRNA-(uracil-5-)-methyltransferase TrmFO (465 aa).

11 to 16 (GGGLAG) is a binding site for FAD.

This sequence belongs to the MnmG family. TrmFO subfamily. Requires FAD as cofactor.

The protein resides in the cytoplasm. The catalysed reaction is uridine(54) in tRNA + (6R)-5,10-methylene-5,6,7,8-tetrahydrofolate + NADH + H(+) = 5-methyluridine(54) in tRNA + (6S)-5,6,7,8-tetrahydrofolate + NAD(+). It carries out the reaction uridine(54) in tRNA + (6R)-5,10-methylene-5,6,7,8-tetrahydrofolate + NADPH + H(+) = 5-methyluridine(54) in tRNA + (6S)-5,6,7,8-tetrahydrofolate + NADP(+). Catalyzes the folate-dependent formation of 5-methyl-uridine at position 54 (M-5-U54) in all tRNAs. The protein is Methylenetetrahydrofolate--tRNA-(uracil-5-)-methyltransferase TrmFO of Acaryochloris marina (strain MBIC 11017).